The sequence spans 105 residues: MLMPKEDRNKIHQYLFQEGVVVAKKDFNQAKHEEIDTKNLYVIKALQSLTSKGYVKTQFSWQYYYYTLTEEGVEYLREYLNLPEHIVPGTYIQERNPTQRPQRRY.

The protein belongs to the eukaryotic ribosomal protein eS10 family. In terms of assembly, component of the small ribosomal subunit (SSU). Mature yeast ribosomes consist of a small (40S) and a large (60S) subunit. The 40S small subunit contains 1 molecule of ribosomal RNA (18S rRNA) and 33 different proteins (encoded by 57 genes). The large 60S subunit contains 3 rRNA molecules (25S, 5.8S and 5S rRNA) and 46 different proteins (encoded by 81 genes). eS10 interacts with GCN1 (via middle region); this interaction is direct and promotes GCN2 kinase activity. In terms of processing, the N-terminus is not modified.

The protein resides in the cytoplasm. Functionally, component of the ribosome, a large ribonucleoprotein complex responsible for the synthesis of proteins in the cell. The small ribosomal subunit (SSU) binds messenger RNAs (mRNAs) and translates the encoded message by selecting cognate aminoacyl-transfer RNA (tRNA) molecules. The large subunit (LSU) contains the ribosomal catalytic site termed the peptidyl transferase center (PTC), which catalyzes the formation of peptide bonds, thereby polymerizing the amino acids delivered by tRNAs into a polypeptide chain. The nascent polypeptides leave the ribosome through a tunnel in the LSU and interact with protein factors that function in enzymatic processing, targeting, and the membrane insertion of nascent chains at the exit of the ribosomal tunnel. eS10 plays a role as a positive regulator of the GCN2 kinase activity by stimulating GCN1-mediated GCN2 activation. This chain is Small ribosomal subunit protein eS10A, found in Saccharomyces cerevisiae (strain ATCC 204508 / S288c) (Baker's yeast).